The primary structure comprises 832 residues: Cadherin-17 (832 aa).

The signal sequence occupies residues 1–22; sequence MILQAHLHSLCLLMLYLATGYG. The Extracellular segment spans residues 23-787; sequence QEGKFSGPLK…HQTGIPTVGM (765 aa). Cadherin domains follow at residues 30–128, 129–244, 245–340, 341–449, 450–566, 567–667, and 668–777; these read PLKP…TFLQ, SKYE…APKP, VEMV…PPTC, PSPV…IPIF, EKSD…APQF, SQHV…PPRL, and AKDY…RPAG. N-linked (GlcNAc...) asparagine glycosylation is found at N149, N184, N250, N419, N456, N546, N587, and N722. The helical transmembrane segment at 788–808 threads the bilayer; sequence AVGILLTTLLVIGIILAVVFI. Over 809–832 the chain is Cytoplasmic; it reads RIKKDKGKDNVESAQASEVKPLRS.

As to expression, expressed in the gastrointestinal tract and pancreatic duct. Not detected in kidney, lung, liver, brain, adrenal gland and skin.

Its subcellular location is the cell membrane. In terms of biological role, cadherins are calcium-dependent cell adhesion proteins. They preferentially interact with themselves in a homophilic manner in connecting cells; cadherins may thus contribute to the sorting of heterogeneous cell types. LI-cadherin may have a role in the morphological organization of liver and intestine. Involved in intestinal peptide transport. The protein is Cadherin-17 (CDH17) of Homo sapiens (Human).